Here is a 344-residue protein sequence, read N- to C-terminus: Phosphoribosylformylglycinamidine cyclo-ligase (344 aa).

The protein belongs to the AIR synthase family.

The protein localises to the cytoplasm. The catalysed reaction is 2-formamido-N(1)-(5-O-phospho-beta-D-ribosyl)acetamidine + ATP = 5-amino-1-(5-phospho-beta-D-ribosyl)imidazole + ADP + phosphate + H(+). The protein operates within purine metabolism; IMP biosynthesis via de novo pathway; 5-amino-1-(5-phospho-D-ribosyl)imidazole from N(2)-formyl-N(1)-(5-phospho-D-ribosyl)glycinamide: step 2/2. This is Phosphoribosylformylglycinamidine cyclo-ligase from Neisseria meningitidis serogroup C (strain 053442).